Consider the following 453-residue polypeptide: uncharacterized protein (453 aa).

2 disordered regions span residues 15–42 (LKRKQPSTSFNGKRKRTSSGLIEKSETM) and 425–453 (TNEISSSNNSGTAKNKNNQNRKRNRRHAK). A compositionally biased stretch (polar residues) spans 425 to 437 (TNEISSSNNSGTA). Positions 443-453 (QNRKRNRRHAK) are enriched in basic residues.

This is an uncharacterized protein from Caenorhabditis elegans.